The sequence spans 518 residues: GMP synthase [glutamine-hydrolyzing] (518 aa).

The Glutamine amidotransferase type-1 domain occupies 11–203 (KIIVLDFGSQ…AFDVCQARSN (193 aa)). The Nucleophile role is filled by Cys88. Catalysis depends on residues His177 and Glu179. The GMPS ATP-PPase domain maps to 204–393 (WSMDDFIDMQ…LGMPHELVWR (190 aa)). 231–237 (SGGVDSS) contributes to the ATP binding site.

Homodimer.

The enzyme catalyses XMP + L-glutamine + ATP + H2O = GMP + L-glutamate + AMP + diphosphate + 2 H(+). Its pathway is purine metabolism; GMP biosynthesis; GMP from XMP (L-Gln route): step 1/1. Functionally, catalyzes the synthesis of GMP from XMP. This is GMP synthase [glutamine-hydrolyzing] from Ligilactobacillus salivarius (strain UCC118) (Lactobacillus salivarius).